Here is a 303-residue protein sequence, read N- to C-terminus: Oxygen-dependent coproporphyrinogen-III oxidase (303 aa).

Serine 93 is a binding site for substrate. A divalent metal cation-binding residues include histidine 97 and histidine 107. Histidine 107 acts as the Proton donor in catalysis. 109-111 (NVR) contacts substrate. A divalent metal cation is bound by residues histidine 149 and histidine 179. The tract at residues 244–279 (YVEFNLVFDRGTLFGLQSGGRTESILLSMPPMAQWR) is important for dimerization. Residue 262-264 (GGR) coordinates substrate.

The protein belongs to the aerobic coproporphyrinogen-III oxidase family. Homodimer. The cofactor is a divalent metal cation.

It is found in the cytoplasm. The catalysed reaction is coproporphyrinogen III + O2 + 2 H(+) = protoporphyrinogen IX + 2 CO2 + 2 H2O. It functions in the pathway porphyrin-containing compound metabolism; protoporphyrin-IX biosynthesis; protoporphyrinogen-IX from coproporphyrinogen-III (O2 route): step 1/1. Involved in the heme biosynthesis. Catalyzes the aerobic oxidative decarboxylation of propionate groups of rings A and B of coproporphyrinogen-III to yield the vinyl groups in protoporphyrinogen-IX. The polypeptide is Oxygen-dependent coproporphyrinogen-III oxidase (Bordetella petrii (strain ATCC BAA-461 / DSM 12804 / CCUG 43448)).